The sequence spans 56 residues: Pituitary adenylate cyclase-activating polypeptide (56 aa).

The segment at 42–50 (VKKYLAAVL) is important for receptor binding. Position 50 is a leucine amide (Leu-50).

The protein belongs to the glucagon family. Interacts with ADCYAP1R1 (via N-terminal extracellular domain).

It is found in the secreted. In terms of biological role, PACAP is a neuropeptide involved in diverse array of physiological processes through activating the PACAP subfamily of class B1 G protein-coupled receptors: VIP receptor 1 (VIPR1), VIP receptor 2 (VIPR2), and PACAP type I receptor (ADCYAP1R1). Exerts neuroprotective and general cytoprotective effects due to anti-apoptotic, anti-inflammatory, and antioxidant actions. The chain is Pituitary adenylate cyclase-activating polypeptide (Adcyap1) from Heloderma suspectum (Gila monster).